The primary structure comprises 132 residues: Nuclear transition protein 2 (132 aa).

Positions 1–20 (MDTKTQSLPNTHAQPHSNSR) are enriched in polar residues. The disordered stretch occupies residues 1 to 132 (MDTKTQSLPN…KRQSSGRKYN (132 aa)). Residues His-12, His-16, His-24, Cys-29, Cys-31, and Cys-35 each coordinate Zn(2+). The span at 37-59 (SRSRSRSCRSRSSSRRPRSHRSP) shows a compositional bias: basic residues. The segment covering 82-94 (SHQCPSRPVTHSC) has biased composition (polar residues). The Nuclear localization signal motif lies at 105–113 (GKVIKRKQV). Residues 108 to 132 (IKRKQVKRSKQVYKRKRQSSGRKYN) are compositionally biased toward basic residues. Ser-127 bears the Phosphoserine mark.

The protein belongs to the nuclear transition protein 2 family. As to expression, testis.

The protein localises to the nucleus. The protein resides in the nucleolus. Its subcellular location is the chromosome. Plays a key role in the replacement of histones to protamine in the elongating spermatids of mammals. In condensing spermatids, loaded onto the nucleosomes, where it promotes the recruitment and processing of protamines, which are responsible for histone eviction. The protein is Nuclear transition protein 2 (TNP2) of Bos taurus (Bovine).